Reading from the N-terminus, the 603-residue chain is NADH-ubiquinone oxidoreductase chain 5 (603 aa).

The next 14 helical transmembrane spans lie at 4–24 (YTSIMLMTLASLALPIFATLV), 36–56 (VKTTMMYAFITSLIPTTLYIF), 87–107 (MMFIPIALFITWSIMEFSLWY), 122–142 (LIFLITMLILITANNLFQLFI), 171–191 (AVLYNRIGDIGLILAMVWFLL), 211–233 (LPLMGLLLAAVGKSAQFGLHPWL), 241–261 (TPVSALLHSSTMVVAGVFLLI), 272–292 (LTQNLTLCLGAITTLFMAMCA), 301–320 (IVAFSTSSQLGLMMITIGIN), 325–347 (AFLHICTHAFFKAMLFICSGSII), 370–390 (STSLIIGNLALTGIPFLTGFY), 406–422 (AWALSITLIATSLTSAY), 488–508 (LLALYMTALGFIITLDLTLMT), and 583–603 (MIKLYFLSFLIPLALALLLMV).

This sequence belongs to the complex I subunit 5 family. In terms of assembly, core subunit of respiratory chain NADH dehydrogenase (Complex I) which is composed of 45 different subunits.

The protein localises to the mitochondrion inner membrane. The catalysed reaction is a ubiquinone + NADH + 5 H(+)(in) = a ubiquinol + NAD(+) + 4 H(+)(out). Functionally, core subunit of the mitochondrial membrane respiratory chain NADH dehydrogenase (Complex I) which catalyzes electron transfer from NADH through the respiratory chain, using ubiquinone as an electron acceptor. Essential for the catalytic activity and assembly of complex I. The sequence is that of NADH-ubiquinone oxidoreductase chain 5 (MT-ND5) from Papio hamadryas (Hamadryas baboon).